The following is a 440-amino-acid chain: Fibulin-7 (440 aa).

The first 24 residues, 1–24, serve as a signal peptide directing secretion; it reads MGPGSQRALFLLLLLLASPGARAF. Residues 28 to 73 adopt a coiled-coil conformation; sequence LNKQQLLTTIRQLQQLLKGQETRFTEGIRNMKSRLAALQNTVNKMT. The Sushi domain occupies 79 to 136; sequence VSCPALEAPPDGKKFGSKYLVDHEVYFTCNPGFQLVGPSSVVCLANGSWTGEQPRCRD. Cystine bridges form between Cys81–Cys121, Cys107–Cys134, Cys140–Cys151, Cys145–Cys160, Cys162–Cys171, Cys229–Cys245, Cys241–Cys254, Cys256–Cys269, Cys275–Cys288, Cys282–Cys297, and Cys302–Cys319. N-linked (GlcNAc...) asparagine glycosylation is present at Asn124. The 37-residue stretch at 136–172 folds into the EGF-like 1; calcium-binding domain; the sequence is DISECSSQPCHNGGTCVEGINHYRCICPPGKTGNRCQ. Residues 225-270 enclose the EGF-like 2; calcium-binding domain; sequence DVNECEIYGQKGRPRLCMHACVNTPGSYRCTCPSGYRILADGKSCE. Residues 271-320 enclose the EGF-like 3; calcium-binding domain; it reads DVDECAGPQHMCPRGTTCINTGGGFQCVNPECPEGSGNISYVKTSPFQCE. The N-linked (GlcNAc...) asparagine glycan is linked to Asn308.

It belongs to the fibulin family. In terms of assembly, interacts with heparin, FBLN1, FN1 and DSPP. Preferentially binds dental mesenchyme cells and odontoblasts but not dental epithelial cells or nondental cells. Binding requires a heparan sulfate-containing receptor on the cell surface as well as an integrin. N-glycosylated. As to expression, highly expressed in newborn incisors and molars. A weaker expression is seen in the brain, kidneys, muscles and bones.

The protein resides in the secreted. Its subcellular location is the extracellular space. The protein localises to the extracellular matrix. An adhesion molecule that interacts with extracellular matrix molecules in developing teeth and may play important roles in differentiation and maintenance of odontoblasts as well as in dentin formation. This Mus musculus (Mouse) protein is Fibulin-7 (Fbln7).